We begin with the raw amino-acid sequence, 509 residues long: Seipin-3 (509 aa).

Positions 33–73 are disordered; it reads YDCLNSSPPANLRRRRLPMDTDSSSSSSTSSLESCEKRSTV. The span at 52 to 63 shows a compositional bias: low complexity; the sequence is DTDSSSSSSTSS. The next 2 membrane-spanning stretches (helical) occupy residues 238–258 and 455–475; these read LFCA…AFMI and LFVW…LVFF.

It belongs to the seipin family. In terms of tissue distribution, expressed in seeds, seedlings, leaves, stems and roots. Not detected in flowers.

Its subcellular location is the endoplasmic reticulum membrane. Its function is as follows. Involved in lipid metabolism and lipid droplet (LD) morphology, number, and size. Supports the formation of small-sized LDs and modulates triacylglycerol accumulation. Induces probably a reorganization of the endoplasmic reticulum into LD-forming domains. The protein is Seipin-3 of Arabidopsis thaliana (Mouse-ear cress).